The primary structure comprises 113 residues: TYRO protein tyrosine kinase-binding protein (113 aa).

A signal peptide spans 1 to 21 (MGGLEPCSRLLLLPLLLAVSG). The Extracellular portion of the chain corresponds to 22-40 (LRPVQAQAQSDCSCSTVSP). The helical transmembrane segment at 41-61 (GVLAGIVMGDLVLTVLIALAV) threads the bilayer. A Ca(2+)-binding site is contributed by D50. Topologically, residues 62–113 (YFLGRLVPRGRGAAEAATRKQRITETESPYQELQGQRSDVYSDLNTQRPYYK) are cytoplasmic. The segment at 75–113 (AEAATRKQRITETESPYQELQGQRSDVYSDLNTQRPYYK) is disordered. The ITAM domain occupies 80-108 (RKQRITETESPYQELQGQRSDVYSDLNTQ). The segment covering 87–113 (TESPYQELQGQRSDVYSDLNTQRPYYK) has biased composition (polar residues). Phosphotyrosine occurs at positions 91 and 102.

The protein belongs to the TYROBP family. Homodimer; disulfide-linked. Homotrimer; disulfide-linked. Homotetramer; disulfide-linked. Homotrimers and homotetramers form when low levels of partner receptors are available and are competitive with assembly with interacting receptors. They may represent alternative oligomerization states or may be intermediates in the receptor assembly process. Binding of a metal cation aids in homooligomerization through coordination of the metal ion by the subunits of the oligomer. Interacts with TREM1. Interacts with TREM2. Interacts with SIRPB1. Interacts with CLECSF5. Interacts with SIGLEC14. Interacts with CD300LB and CD300E. Interacts with CD300C2. Interacts (via ITAM domain) with SYK (via SH2 domains); activates SYK mediating neutrophil and macrophage integrin-mediated activation. Interacts with KLRC2, KIR2DS3 and KIR2DS5. Interacts with CD300H. Interacts with KIR2DS1. Interacts with KLRD1. Interacts with SIGLEC1. Following ligand binding by associated receptors, tyrosine phosphorylated in the ITAM domain which leads to activation of additional tyrosine kinases and subsequent cell activation. As to expression, expressed at low levels in the early development of the hematopoietic system and in the promonocytic stage and at high levels in mature monocytes. Expressed in hematological cells and tissues such as peripheral blood leukocytes and spleen. Also found in bone marrow, lymph nodes, placenta, lung and liver. Expressed at lower levels in different parts of the brain especially in the basal ganglia and corpus callosum.

It localises to the cell membrane. Functionally, adapter protein which non-covalently associates with activating receptors found on the surface of a variety of immune cells to mediate signaling and cell activation following ligand binding by the receptors. TYROBP is tyrosine-phosphorylated in the ITAM domain following ligand binding by the associated receptors which leads to activation of additional tyrosine kinases and subsequent cell activation. Also has an inhibitory role in some cells. Non-covalently associates with activating receptors of the CD300 family to mediate cell activation. Also mediates cell activation through association with activating receptors of the CD200R family. Required for neutrophil activation mediated by integrin. Required for the activation of myeloid cells mediated by the CLEC5A/MDL1 receptor. Associates with natural killer (NK) cell receptors such as KIR2DS2 and the KLRD1/KLRC2 heterodimer to mediate NK cell activation. Also enhances trafficking and cell surface expression of NK cell receptors KIR2DS1, KIR2DS2 and KIR2DS4 and ensures their stability at the cell surface. Associates with SIRPB1 to mediate activation of myeloid cells such as monocytes and dendritic cells. Associates with TREM1 to mediate activation of neutrophils and monocytes. Associates with TREM2 on monocyte-derived dendritic cells to mediate up-regulation of chemokine receptor CCR7 and dendritic cell maturation and survival. Association with TREM2 mediates cytokine-induced formation of multinucleated giant cells which are formed by the fusion of macrophages. Stabilizes the TREM2 C-terminal fragment (TREM2-CTF) produced by TREM2 ectodomain shedding which suppresses the release of pro-inflammatory cytokines. In microglia, required with TREM2 for phagocytosis of apoptotic neurons. Required with ITGAM/CD11B in microglia to control production of microglial superoxide ions which promote the neuronal apoptosis that occurs during brain development. Promotes pro-inflammatory responses in microglia following nerve injury which accelerates degeneration of injured neurons. Positively regulates the expression of the IRAK3/IRAK-M kinase and IL10 production by liver dendritic cells and inhibits their T cell allostimulatory ability. Negatively regulates B cell proliferation. Required for CSF1-mediated osteoclast cytoskeletal organization. Positively regulates multinucleation during osteoclast development. This is TYRO protein tyrosine kinase-binding protein from Homo sapiens (Human).